Here is a 737-residue protein sequence, read N- to C-terminus: Polyribonucleotide nucleotidyltransferase (737 aa).

2 residues coordinate Mg(2+): Asp514 and Asp520. The region spanning 580–639 (PRIITVKIPVDKIGEVIGPKGKMINQIQEDTGADITIEDDGTIYIGAQAGSQAEAARATI) is the KH domain. Residues 651-723 (GERYLGTVVK…SRGKLSLIPV (73 aa)) enclose the S1 motif domain.

This sequence belongs to the polyribonucleotide nucleotidyltransferase family. Requires Mg(2+) as cofactor.

The protein localises to the cytoplasm. The enzyme catalyses RNA(n+1) + phosphate = RNA(n) + a ribonucleoside 5'-diphosphate. In terms of biological role, involved in mRNA degradation. Catalyzes the phosphorolysis of single-stranded polyribonucleotides processively in the 3'- to 5'-direction. The protein is Polyribonucleotide nucleotidyltransferase of Streptomyces griseus subsp. griseus (strain JCM 4626 / CBS 651.72 / NBRC 13350 / KCC S-0626 / ISP 5235).